Consider the following 37-residue polypeptide: MVEALLSGIVPGLIPITLAGSFVIAYLQYRRGDQLDL.

A helical transmembrane segment spans residues 5 to 25; sequence LLSGIVPGLIPITLAGSFVIA.

The protein belongs to the PetG family. As to quaternary structure, the 4 large subunits of the cytochrome b6-f complex are cytochrome b6, subunit IV (17 kDa polypeptide, PetD), cytochrome f and the Rieske protein, while the 4 small subunits are PetG, PetL, PetM and PetN. The complex functions as a dimer.

It is found in the plastid membrane. Its function is as follows. Component of the cytochrome b6-f complex, which mediates electron transfer between photosystem II (PSII) and photosystem I (PSI), cyclic electron flow around PSI, and state transitions. PetG is required for either the stability or assembly of the cytochrome b6-f complex. The polypeptide is Cytochrome b6-f complex subunit 5 (Aneura mirabilis (Parasitic liverwort)).